A 637-amino-acid chain; its full sequence is MDLLTRIKGPRDLDRLSLGELDQLAQEIRTFLVDAVSKTGGHLGPNLGVVELTIALHRVFESPRDKVLWDTGHQSYVHKLLTGRQDFSRLKSKGGLSGYPSRAESDHDVIENSHASGVLGWADGMAKANEVLRKDDHVVAVIGDGALTGGMAWEALNNIAAAKDRPLVIVVNDNERSYAPTIGGLANHLATLRTTDGYERFLARGKDILERTPVVGRPLYETLHGAKKGLKDFIAPQGMFEDLGLKYVGPIDGHDIEALESALQRAKRFRGPVIVHCLTEKGRGYTPALEDEADRFHAVGKIHPDTGLPISTSGLDWTSVFGEEMVKLGEEREDIVAITAAMLQPVGLGKFEAAFPDRIYDVGIAEQHGAASAAGLATGGLHPVFAVYATFLNRAFDQVLMDVALHKCGVTFVLDRAGITGTDGASHNGMWDMSILQCVPTLRIAAPRDADQVRAQLREAVAVDDAPTVVRFSKGAVGPAVKAVGRAGGMDILRRPTAARPDVLIVSVGALAPMCLEIADLLDAQGISSTVVDPRWVKPVDEALAPLAERHRVVVTVEDNSRAGGVGSAVAQSLRDAGVDVPLRDFGIPPVFLDHASRGEVMAEIGLTAPDIARQVTGLVAKLDGRFESRAVEPARD.

Residues histidine 73 and 113–115 (SHA) contribute to the thiamine diphosphate site. Aspartate 144 lines the Mg(2+) pocket. Residues 145 to 146 (GA), asparagine 174, tyrosine 285, and glutamate 366 contribute to the thiamine diphosphate site. Asparagine 174 contacts Mg(2+).

Belongs to the transketolase family. DXPS subfamily. As to quaternary structure, homodimer. Mg(2+) is required as a cofactor. Thiamine diphosphate serves as cofactor.

It catalyses the reaction D-glyceraldehyde 3-phosphate + pyruvate + H(+) = 1-deoxy-D-xylulose 5-phosphate + CO2. It participates in metabolic intermediate biosynthesis; 1-deoxy-D-xylulose 5-phosphate biosynthesis; 1-deoxy-D-xylulose 5-phosphate from D-glyceraldehyde 3-phosphate and pyruvate: step 1/1. Catalyzes the acyloin condensation reaction between C atoms 2 and 3 of pyruvate and glyceraldehyde 3-phosphate to yield 1-deoxy-D-xylulose-5-phosphate (DXP). The sequence is that of 1-deoxy-D-xylulose-5-phosphate synthase from Streptomyces griseus subsp. griseus (strain JCM 4626 / CBS 651.72 / NBRC 13350 / KCC S-0626 / ISP 5235).